The following is a 451-amino-acid chain: MQFNSLVLLAGATILSPFVQAQTWTTCNPLNETCPNDPALGTNHTFVFNTSSTVTDYYNITAGSLTYGDDGAEFTIAKQGQSPTIQSKFYIFFGQVSVIMKAATGVGIVSSIVLESDDLDEIDWEFIGGNDTHAETNYFGKGNTTSYDRAIWYPTPSDPTANFHNYTVDWTAERVQWWIDDSLVRTLAYADAVDGKNFPQTPMTVRLGIWSGGDPKGNSQGTIEWAGGETDFTKVPFTMYVKSAAVQDYSTGSEYEWTDKTGDWTSIKVISGNSTVAETITKNETPTLSLGEKWDNLPKTTKLAVYCGGGAAVAALVSAFLFTFLRQRRNGRLEREAYNQLIEKQQQDAYKDQMELHNKGIGGFDNNSYATQGDDALGGWGSNQGTGYVGPSGSASAMASGSPMVQAGQHGPMSPTMVMRNGEMSPHSAEFPQPQQPMFGGSANGGSYMKM.

The signal sequence occupies residues 1-21 (MQFNSLVLLAGATILSPFVQA). In terms of domain architecture, GH16 spans 22 to 241 (QTWTTCNPLN…FTKVPFTMYV (220 aa)). A disulfide bond links Cys-27 and Cys-34. Asn-31, Asn-43, Asn-49, and Asn-59 each carry an N-linked (GlcNAc...) asparagine glycan. Glu-121 (nucleophile) is an active-site residue. The active-site Proton donor is Glu-125. Glu-125 provides a ligand contact to chitin. 3 N-linked (GlcNAc...) asparagine glycosylation sites follow: Asn-130, Asn-143, and Asn-165. The chitin site is built by Arg-206, Trp-210, and Thr-222. A glycan (N-linked (GlcNAc...) asparagine) is linked at Asn-273. Residues 305–325 (VYCGGGAAVAALVSAFLFTFL) form a helical membrane-spanning segment. Asn-366 is a glycosylation site (N-linked (GlcNAc...) asparagine).

It belongs to the glycosyl hydrolase 16 family. CRH1 subfamily. Forms homodimers as well as heterodimers with other crh protein members crh1 and crh3. Dimerization may be necessary for the transglycosylation activity.

Its subcellular location is the membrane. It carries out the reaction Random endo-hydrolysis of N-acetyl-beta-D-glucosaminide (1-&gt;4)-beta-linkages in chitin and chitodextrins.. In terms of biological role, dual chitinase/transglycosylase that plays a role in cell wall architecture. Chitinase and transglycosylase activities are coupled. Required for the polysaccharide cross-linking at the septa and the cell wall. More specifically, transfers chitin to 1,6-beta-glucan in the cell wall. This is Crh-like protein 2 from Botryotinia fuckeliana (strain B05.10) (Noble rot fungus).